Here is a 192-residue protein sequence, read N- to C-terminus: Flavin prenyltransferase UbiX (192 aa).

FMN is bound by residues 10–12 (GAS), S36, 92–95 (SMTT), and R127. Dimethylallyl phosphate contacts are provided by Y157 and K173.

The protein belongs to the UbiX/PAD1 family.

It carries out the reaction dimethylallyl phosphate + FMNH2 = prenylated FMNH2 + phosphate. Flavin prenyltransferase that catalyzes the synthesis of the prenylated FMN cofactor (prenyl-FMN) for 4-hydroxy-3-polyprenylbenzoic acid decarboxylase UbiD. The prenyltransferase is metal-independent and links a dimethylallyl moiety from dimethylallyl monophosphate (DMAP) to the flavin N5 and C6 atoms of FMN. This Chlamydia pneumoniae (Chlamydophila pneumoniae) protein is Flavin prenyltransferase UbiX.